Here is a 387-residue protein sequence, read N- to C-terminus: GTP-binding protein 10 (387 aa).

In terms of domain architecture, Obg spans 13 to 148; the sequence is GNFIDKLRLF…RIIHLDLKLI (136 aa). Positions 149 to 344 constitute an OBG-type G domain; sequence ADVGLVGFPN…LKNCIRKSLD (196 aa). GTP-binding positions include 155-162, 202-206, and 278-281; these read GFPNAGKS, DLPGL, and NKMD.

Belongs to the TRAFAC class OBG-HflX-like GTPase superfamily. OBG GTPase family.

The protein localises to the nucleus. Its subcellular location is the nucleolus. It localises to the chromosome. May be involved in the ribosome maturation process. Complements an ObgE(CgtA) function in E.coli ribosome maturation. Plays a role of GTPase in vitro. When missing, disorganization of the nucleolar architecture is observed. The sequence is that of GTP-binding protein 10 (GTPBP10) from Homo sapiens (Human).